The primary structure comprises 317 residues: tRNA dimethylallyltransferase (317 aa).

Position 18 to 25 (18 to 25) interacts with ATP; the sequence is GPTATGKT. 20-25 contributes to the substrate binding site; sequence TATGKT. Interaction with substrate tRNA regions lie at residues 43-46, 167-171, and 281-288; these read DSAL, QRIQR, and KRQITWLR.

Belongs to the IPP transferase family. As to quaternary structure, monomer. Mg(2+) serves as cofactor.

The enzyme catalyses adenosine(37) in tRNA + dimethylallyl diphosphate = N(6)-dimethylallyladenosine(37) in tRNA + diphosphate. In terms of biological role, catalyzes the transfer of a dimethylallyl group onto the adenine at position 37 in tRNAs that read codons beginning with uridine, leading to the formation of N6-(dimethylallyl)adenosine (i(6)A). The chain is tRNA dimethylallyltransferase from Alkalilimnicola ehrlichii (strain ATCC BAA-1101 / DSM 17681 / MLHE-1).